We begin with the raw amino-acid sequence, 367 residues long: 2-aminoethylphosphonate--pyruvate transaminase (367 aa).

K194 is subject to N6-(pyridoxal phosphate)lysine.

This sequence belongs to the class-V pyridoxal-phosphate-dependent aminotransferase family. PhnW subfamily. In terms of assembly, homodimer. Pyridoxal 5'-phosphate serves as cofactor.

The catalysed reaction is (2-aminoethyl)phosphonate + pyruvate = phosphonoacetaldehyde + L-alanine. Functionally, involved in phosphonate degradation. The polypeptide is 2-aminoethylphosphonate--pyruvate transaminase (Salmonella agona (strain SL483)).